Here is a 462-residue protein sequence, read N- to C-terminus: A-type ATP synthase subunit B (462 aa).

The protein belongs to the ATPase alpha/beta chains family. In terms of assembly, has multiple subunits with at least A(3), B(3), C, D, E, F, H, I and proteolipid K(x).

The protein resides in the cell membrane. Its function is as follows. Component of the A-type ATP synthase that produces ATP from ADP in the presence of a proton gradient across the membrane. The B chain is a regulatory subunit. This is A-type ATP synthase subunit B from Cenarchaeum symbiosum (strain A).